The sequence spans 304 residues: uncharacterized protein (304 aa).

Belongs to the histone deacetylase family.

Putative deacetylase. This is an uncharacterized protein from Synechocystis sp. (strain ATCC 27184 / PCC 6803 / Kazusa).